A 398-amino-acid chain; its full sequence is Cysteine desulfurase 2 (398 aa).

Residues 71 to 72, Asn150, Gln178, and 198 to 200 contribute to the pyridoxal 5'-phosphate site; these read GT and SGH. Lys201 bears the N6-(pyridoxal phosphate)lysine mark. Residue Thr236 participates in pyridoxal 5'-phosphate binding. Cys323 functions as the Cysteine persulfide intermediate in the catalytic mechanism. Position 323 (Cys323) interacts with [2Fe-2S] cluster.

This sequence belongs to the class-V pyridoxal-phosphate-dependent aminotransferase family. NifS/IscS subfamily. In terms of assembly, homodimer. Pyridoxal 5'-phosphate is required as a cofactor.

The enzyme catalyses (sulfur carrier)-H + L-cysteine = (sulfur carrier)-SH + L-alanine. Its function is as follows. Catalyzes the removal of elemental sulfur atoms from cysteine to produce alanine. Seems to participate in the biosynthesis of the nitrogenase metalloclusters by providing the inorganic sulfur required for the Fe-S core formation. The sequence is that of Cysteine desulfurase 2 from Trichormus variabilis (strain ATCC 29413 / PCC 7937) (Anabaena variabilis).